Reading from the N-terminus, the 505-residue chain is Apolipoprotein N-acyltransferase (505 aa).

A run of 6 helical transmembrane segments spans residues 26 to 46 (FAPY…LILL), 66 to 86 (FATG…MPLI), 89 to 109 (LFLM…FAWL), 129 to 149 (LWLI…WLWL), 161 to 181 (FAPI…AGAL), and 186 to 206 (IHKQ…GFGI). One can recognise a CN hydrolase domain in the interval 225–471 (IQGNVDQNLK…TAVLRAELTP (247 aa)). Glu-264 serves as the catalytic Proton acceptor. Lys-330 is an active-site residue. Residue Cys-382 is the Nucleophile of the active site. Residues 481–501 (FGTWPLYFWVALSLMLAWWLP) form a helical membrane-spanning segment.

Belongs to the CN hydrolase family. Apolipoprotein N-acyltransferase subfamily.

Its subcellular location is the cell inner membrane. It carries out the reaction N-terminal S-1,2-diacyl-sn-glyceryl-L-cysteinyl-[lipoprotein] + a glycerophospholipid = N-acyl-S-1,2-diacyl-sn-glyceryl-L-cysteinyl-[lipoprotein] + a 2-acyl-sn-glycero-3-phospholipid + H(+). It functions in the pathway protein modification; lipoprotein biosynthesis (N-acyl transfer). In terms of biological role, catalyzes the phospholipid dependent N-acylation of the N-terminal cysteine of apolipoprotein, the last step in lipoprotein maturation. This chain is Apolipoprotein N-acyltransferase, found in Vibrio parahaemolyticus serotype O3:K6 (strain RIMD 2210633).